Reading from the N-terminus, the 651-residue chain is Macrolide export ATP-binding/permease protein MacB (651 aa).

The ABC transporter domain maps to I2–A239. Residue G38–S45 participates in ATP binding. Helical transmembrane passes span F269–G289, I532–V552, I589–A609, and M614–W634.

This sequence belongs to the ABC transporter superfamily. Macrolide exporter (TC 3.A.1.122) family. As to quaternary structure, homodimer.

It localises to the cell inner membrane. Functionally, non-canonical ABC transporter that contains transmembrane domains (TMD), which form a pore in the inner membrane, and an ATP-binding domain (NBD), which is responsible for energy generation. Confers resistance against macrolides. The protein is Macrolide export ATP-binding/permease protein MacB of Chlorobaculum tepidum (strain ATCC 49652 / DSM 12025 / NBRC 103806 / TLS) (Chlorobium tepidum).